The primary structure comprises 163 residues: NADH-quinone oxidoreductase subunit I (163 aa).

4Fe-4S ferredoxin-type domains follow at residues 55-84 (RRYENGEERCIACKLCEAVCPANAITIESE) and 94-123 (TQYDIDMFKCIYCGFCEEACPVDAVVETRV). Cysteine 64, cysteine 67, cysteine 70, cysteine 74, cysteine 103, cysteine 106, cysteine 109, and cysteine 113 together coordinate [4Fe-4S] cluster.

The protein belongs to the complex I 23 kDa subunit family. In terms of assembly, NDH-1 is composed of 14 different subunits. Subunits NuoA, H, J, K, L, M, N constitute the membrane sector of the complex. It depends on [4Fe-4S] cluster as a cofactor.

The protein localises to the cell inner membrane. It catalyses the reaction a quinone + NADH + 5 H(+)(in) = a quinol + NAD(+) + 4 H(+)(out). Its function is as follows. NDH-1 shuttles electrons from NADH, via FMN and iron-sulfur (Fe-S) centers, to quinones in the respiratory chain. The immediate electron acceptor for the enzyme in this species is believed to be ubiquinone. Couples the redox reaction to proton translocation (for every two electrons transferred, four hydrogen ions are translocated across the cytoplasmic membrane), and thus conserves the redox energy in a proton gradient. In Hydrogenovibrio crunogenus (strain DSM 25203 / XCL-2) (Thiomicrospira crunogena), this protein is NADH-quinone oxidoreductase subunit I.